Reading from the N-terminus, the 89-residue chain is Small ribosomal subunit protein uS15 (89 aa).

This sequence belongs to the universal ribosomal protein uS15 family. Part of the 30S ribosomal subunit. Forms a bridge to the 50S subunit in the 70S ribosome, contacting the 23S rRNA.

In terms of biological role, one of the primary rRNA binding proteins, it binds directly to 16S rRNA where it helps nucleate assembly of the platform of the 30S subunit by binding and bridging several RNA helices of the 16S rRNA. Functionally, forms an intersubunit bridge (bridge B4) with the 23S rRNA of the 50S subunit in the ribosome. In Buchnera aphidicola subsp. Schizaphis graminum (strain Sg), this protein is Small ribosomal subunit protein uS15.